Here is a 199-residue protein sequence, read N- to C-terminus: ATP-dependent Clp protease proteolytic subunit (199 aa).

Ser97 serves as the catalytic Nucleophile. The active site involves His122.

This sequence belongs to the peptidase S14 family. In terms of assembly, fourteen ClpP subunits assemble into 2 heptameric rings which stack back to back to give a disk-like structure with a central cavity, resembling the structure of eukaryotic proteasomes.

The protein localises to the cytoplasm. The enzyme catalyses Hydrolysis of proteins to small peptides in the presence of ATP and magnesium. alpha-casein is the usual test substrate. In the absence of ATP, only oligopeptides shorter than five residues are hydrolyzed (such as succinyl-Leu-Tyr-|-NHMec, and Leu-Tyr-Leu-|-Tyr-Trp, in which cleavage of the -Tyr-|-Leu- and -Tyr-|-Trp bonds also occurs).. Functionally, cleaves peptides in various proteins in a process that requires ATP hydrolysis. Has a chymotrypsin-like activity. Plays a major role in the degradation of misfolded proteins. This is ATP-dependent Clp protease proteolytic subunit from Citrifermentans bemidjiense (strain ATCC BAA-1014 / DSM 16622 / JCM 12645 / Bem) (Geobacter bemidjiensis).